The chain runs to 467 residues: Argininosuccinate lyase 1 (467 aa).

This sequence belongs to the lyase 1 family. Argininosuccinate lyase subfamily.

It localises to the cytoplasm. It catalyses the reaction 2-(N(omega)-L-arginino)succinate = fumarate + L-arginine. The protein operates within amino-acid biosynthesis; L-arginine biosynthesis; L-arginine from L-ornithine and carbamoyl phosphate: step 3/3. This is Argininosuccinate lyase 1 from Rhizobium meliloti (strain 1021) (Ensifer meliloti).